Consider the following 547-residue polypeptide: Chaperonin GroEL (547 aa).

Residues 30-33, K51, 87-91, G415, and D496 contribute to the ATP site; these read TLGP and DGTTT. Positions 528-547 are disordered; that stretch reads KEGAGAGGGMPDMGGMGGMM. Gly residues predominate over residues 531–547; sequence AGAGGGMPDMGGMGGMM.

The protein belongs to the chaperonin (HSP60) family. Forms a cylinder of 14 subunits composed of two heptameric rings stacked back-to-back. Interacts with the co-chaperonin GroES.

It localises to the cytoplasm. The catalysed reaction is ATP + H2O + a folded polypeptide = ADP + phosphate + an unfolded polypeptide.. In terms of biological role, together with its co-chaperonin GroES, plays an essential role in assisting protein folding. The GroEL-GroES system forms a nano-cage that allows encapsulation of the non-native substrate proteins and provides a physical environment optimized to promote and accelerate protein folding. The polypeptide is Chaperonin GroEL (Dinoroseobacter shibae (strain DSM 16493 / NCIMB 14021 / DFL 12)).